The primary structure comprises 951 residues: Serine/threonine-protein phosphatase 4 regulatory subunit 1 (951 aa).

HEAT repeat units lie at residues 26-63 (ESDVIIIPSALDFVSQDEMLTPLGRLDKYAASENVFNR), 65-81 (MVARSLLDTLREVCDDE), 82-119 (RDCIAVLERISRLADDSEPTVRAELMEQVPHIALFCQE), 127-164 (AFSKYLLPIVVRYLADQNNQVRKTSQAALLALLEQELI), 168-206 (DVETKVCPVLIDLTAPDSNDDVKTEAVAIMCKMAPMVGK), 208-246 (ITERLILPRFCEMCCDCRMFHVRKVCAANFGDICSVVGQ), 248-285 (ATEEMLLPRFFQLCSDNVWGVRKACAECFMAVSCATCQ), and 287-324 (IRRTKLSALFINLISDPSRWVRQAAFQSLGPFISTFAN). Disordered stretches follow at residues 325-377 (PSSS…HSSA), 411-451 (SESP…PLDQ), and 474-499 (QQDPEERLSPERTGDVPAAPLPGPPN). A compositionally biased stretch (basic and acidic residues) spans 332–365 (FKDESKSSEDSSAEDKDRMRDNDVVEEEHRRPED). Polar residues-rich tracts occupy residues 411 to 421 (SESPQEAASND) and 430 to 445 (NSKSASRPDAGTSSPE). The segment covering 474–487 (QQDPEERLSPERTG) has biased composition (basic and acidic residues). Residues 506 to 543 (KELEEMIENLEPHMDDPDVKAQVDVLSAALRASSLDAH) form an HEAT 9 repeat. The tract at residues 590 to 612 (DYVHGGADVSPGDGFSPDEDRRP) is disordered. 3 HEAT repeats span residues 699–735 (LTAADLVPIFNGFLKDLDEVRIGVLKHLHDFLKLLHI), 800–838 (WISYKLVSEMVKKLHTATPPTFGVDLINELVENFGRCPK), and 862–899 (QFAVHLMPHLLTLANDRVPNVRVLLAKTLRQTLLEKEY). Serine 936 carries the phosphoserine modification.

In terms of assembly, serine/threonine-protein phosphatase 4 (PP4) occurs in different assemblies of the catalytic and one or more regulatory subunits. Component of the PP4 complex PPP4C-PPP4R1. Interacts with HDAC3.

In terms of biological role, regulatory subunit of serine/threonine-protein phosphatase 4. May play a role in regulation of cell division in renal glomeruli. The PPP4C-PPP4R1 PP4 complex may play a role in dephosphorylation and regulation of HDAC3. Plays a role in the inhibition of TNF-induced NF-kappa-B activation by regulating the dephosphorylation of TRAF2. This Mus musculus (Mouse) protein is Serine/threonine-protein phosphatase 4 regulatory subunit 1 (Ppp4r1).